The chain runs to 59 residues: UPF0434 protein VIBHAR_01537 (59 aa).

It belongs to the UPF0434 family.

In Vibrio campbellii (strain ATCC BAA-1116), this protein is UPF0434 protein VIBHAR_01537.